Here is a 447-residue protein sequence, read N- to C-terminus: Guanine nucleotide-binding protein alpha-1 subunit (447 aa).

The N-myristoyl glycine moiety is linked to residue Gly2. A lipid anchor (S-palmitoyl cysteine) is attached at Cys3. A G-alpha domain is found at 40-447 (NEVKLLLLGA…QQNLKKSGIL (408 aa)). The interval 43 to 56 (KLLLLGAGESGKST) is G1 motif. The GTP site is built by Glu51, Ser52, Gly53, Lys54, Ser55, Thr56, Leu269, Thr275, Gly297, Asn363, Lys364, Asp366, and Ala419. Ser55 is a binding site for Mg(2+). The interval 267 to 275 (DILKGRIKT) is G2 motif. Thr275 contributes to the Mg(2+) binding site. The G3 motif stretch occupies residues 290 to 299 (FKVYDAGGQR). The tract at residues 359–366 (ILFLNKVD) is G4 motif. Positions 417-422 (TCATDT) are G5 motif.

Belongs to the G-alpha family. In terms of assembly, g proteins are composed of 3 units; alpha, beta and gamma. The alpha chain contains the guanine nucleotide binding site. It depends on Mg(2+) as a cofactor.

Its function is as follows. Guanine nucleotide-binding proteins (G proteins) are involved as modulators or transducers in various transmembrane signaling systems. This protein is involved in the mating response pathway. This Kluyveromyces lactis (strain ATCC 8585 / CBS 2359 / DSM 70799 / NBRC 1267 / NRRL Y-1140 / WM37) (Yeast) protein is Guanine nucleotide-binding protein alpha-1 subunit (GPA1).